The primary structure comprises 397 residues: Sexual differentiation process protein isp7 (397 aa).

The Fe2OG dioxygenase domain maps to 255-353; it reads PTTSIRLLRY…RYTIPFFLQG (99 aa).

Belongs to the iron/ascorbate-dependent oxidoreductase family.

The chain is Sexual differentiation process protein isp7 (isp7) from Schizosaccharomyces pombe (strain 972 / ATCC 24843) (Fission yeast).